A 268-amino-acid chain; its full sequence is MSATRIGVVGAGGRMGRMLIEATLKDDRLVLGAAFDVPGSPALGKTAGELVGLPCDVVVTDDVAAGLKNIDCLIDFTRPQGTLVHLELCRKAGVGMVIGTTGFEADGKAVIAEAAKDIPVVFAPNMAVGVNVAFKLLETAARILNQGYDIEIVEAHHRLKVDAPSGTALRMGEVVASALGRDLEECAVYGREGVTGERDPSTIGFATVRGGDIVGDHTVMFCGIGERVEITHKASSRMPYALGSLRAARFMAGHKSGLFDMQDVLGLR.

Residues 10-15, aspartate 36, 99-101, and 123-126 each bind NAD(+); these read GAGGRM, GTT, and APNM. The active-site Proton donor/acceptor is the histidine 156. Histidine 157 contacts (S)-2,3,4,5-tetrahydrodipicolinate. Residue lysine 160 is the Proton donor of the active site. A (S)-2,3,4,5-tetrahydrodipicolinate-binding site is contributed by 166-167; the sequence is GT.

It belongs to the DapB family.

The protein localises to the cytoplasm. It carries out the reaction (S)-2,3,4,5-tetrahydrodipicolinate + NAD(+) + H2O = (2S,4S)-4-hydroxy-2,3,4,5-tetrahydrodipicolinate + NADH + H(+). The enzyme catalyses (S)-2,3,4,5-tetrahydrodipicolinate + NADP(+) + H2O = (2S,4S)-4-hydroxy-2,3,4,5-tetrahydrodipicolinate + NADPH + H(+). It participates in amino-acid biosynthesis; L-lysine biosynthesis via DAP pathway; (S)-tetrahydrodipicolinate from L-aspartate: step 4/4. Catalyzes the conversion of 4-hydroxy-tetrahydrodipicolinate (HTPA) to tetrahydrodipicolinate. The protein is 4-hydroxy-tetrahydrodipicolinate reductase of Dechloromonas aromatica (strain RCB).